An 84-amino-acid chain; its full sequence is MSKKSTSAALPSSFEEAMAELEQLVARMEAGELPLEASVAAYKRGSELVKYCAAQLEKVDSQVKVLEGDMLKPFNADRAIEADE.

It belongs to the XseB family. Heterooligomer composed of large and small subunits.

Its subcellular location is the cytoplasm. The catalysed reaction is Exonucleolytic cleavage in either 5'- to 3'- or 3'- to 5'-direction to yield nucleoside 5'-phosphates.. Functionally, bidirectionally degrades single-stranded DNA into large acid-insoluble oligonucleotides, which are then degraded further into small acid-soluble oligonucleotides. In Herminiimonas arsenicoxydans, this protein is Exodeoxyribonuclease 7 small subunit.